Here is a 1129-residue protein sequence, read N- to C-terminus: ISWI chromatin-remodeling complex ATPase ISW1 (1129 aa).

The interval 144-177 is disordered; the sequence is KANGKGKGKHQDVRRRKTEHEEDAELLKEEDSDD. A compositionally biased stretch (basic residues) spans 147–160; it reads GKGKGKHQDVRRRK. The segment covering 164-177 has biased composition (acidic residues); that stretch reads EEDAELLKEEDSDD. The Helicase ATP-binding domain maps to 208-373; it reads VSLHKNKIAG…WALLNFLLPD (166 aa). 221 to 228 serves as a coordination point for ATP; sequence DEMGLGKT. The DEAH box signature appears at 324–327; the sequence is DEAH. In terms of domain architecture, Helicase C-terminal spans 506–657; sequence VLDKLLKKLK…QLVIQQNRTS (152 aa). Residues 683-705 form a disordered region; that stretch reads FKSGTSTGSAGTPEPGSGEKGDD. At Thr694 the chain carries Phosphothreonine. A Phosphoserine modification is found at Ser846. 2 consecutive SANT domains span residues 882–935 and 988–1052; these read EGFT…SNIE and NKRT…LLQC. Residues 1073 to 1108 are compositionally biased toward basic and acidic residues; it reads KEDENGKRIREEFADQTANEKENVDGVESKKAKIED. The disordered stretch occupies residues 1073 to 1129; sequence KEDENGKRIREEFADQTANEKENVDGVESKKAKIEDTSNVGTEQLVAEKIPENETTH.

It belongs to the SNF2/RAD54 helicase family. ISWI subfamily. Component of the ISW1A complex, which at least consists of ISW1 and IOC3. Component of the ISW1B complex, which at least consists of ISW1, IOC2 and IOC4.

It is found in the nucleus. Functionally, catalytic component of ISW1-type complexes, which act by remodeling the chromatin by catalyzing an ATP-dependent alteration in the structure of nucleosomal DNA. They are involved in coordinating transcriptional repression, activation and elongation phases. The ISW1A complex represses gene expression at initiation through specific positioning of a promoter proximal dinucleosome. The ISW1B complex acts within coding regions to control the amount of RNA polymerase II released into productive elongation and to coordinate elongation with termination and pre-mRNA processing. This Saccharomyces cerevisiae (strain ATCC 204508 / S288c) (Baker's yeast) protein is ISWI chromatin-remodeling complex ATPase ISW1 (ISW1).